Consider the following 605-residue polypeptide: MPVRRLDPVLIDRIAAGEVIERPASALKELIENALDAGARRIDVAIEAGGRKLIRVVDDGCGMAPEDLDLAVERHATSKLPEGDLSSIETLGFRGEALPSIGSVAALEIFSRAMGSAVGARVKVDCGVKEGPAPAAQPQGTRVEIRDLFAGTPARLKFLRTDRAEARASAEIVERLAMAHPQVRFGFASSDVRGFDLAACADSPEGRLTRFSAVLGKDFRDNALFVEAEREGVRLQGFAGLPTWHRASAAAQHVFVNGRPVRDRLLLGAARAAYMDFLPSGRHAALVLFLTCDPREVDVNVHPAKAEVRFRDPGLTRGLIVGALKQTLADAQHRASPVNGASALDVLARRGPGFSGAGGPANWDWRRSPANPGFDAAALAGFAEAPAAAFAAVESLAADTRANAAAPSLEDLEAPLGAARAQIHETYIVSQTRDGIVIVDQHAAHERLVYERLKAARAGSKAPRQALLIPAIVELARAEVEAILDAAVLLAEFGLIIEPFGPGAVAVTETPALLQDPDPTRLARDLAAALVEDDGAAALERRFNLVLATMACHNSVRAGRRMRPEEMNALLRDMERTPGSGQCNHGRPTYVELKLADVEKLFGRR.

Belongs to the DNA mismatch repair MutL/HexB family.

Its function is as follows. This protein is involved in the repair of mismatches in DNA. It is required for dam-dependent methyl-directed DNA mismatch repair. May act as a 'molecular matchmaker', a protein that promotes the formation of a stable complex between two or more DNA-binding proteins in an ATP-dependent manner without itself being part of a final effector complex. This chain is DNA mismatch repair protein MutL, found in Methylocella silvestris (strain DSM 15510 / CIP 108128 / LMG 27833 / NCIMB 13906 / BL2).